Consider the following 254-residue polypeptide: Small ribosomal subunit protein uS2 (254 aa).

The protein belongs to the universal ribosomal protein uS2 family.

In Oceanobacillus iheyensis (strain DSM 14371 / CIP 107618 / JCM 11309 / KCTC 3954 / HTE831), this protein is Small ribosomal subunit protein uS2.